A 414-amino-acid chain; its full sequence is WW domain-containing oxidoreductase (414 aa).

The tract at residues 1-23 (MAALKYAGLEDTDSEEELPPGWE) is disordered. The 34-residue stretch at 16–49 (EELPPGWEERTTKDGWVYYANHLEEKTQWEHPKS) folds into the WW 1 domain. The short motif at 50–55 (GKRKRV) is the Nuclear localization signal element. One can recognise a WW 2 domain in the interval 57–90 (GGLPYGWEQETDENGQVYFVDHINKRTTYLDPRL). NADP(+) is bound at residue 131-137 (GANSGIG). Ser260 is a substrate binding site. The active-site Proton acceptor is the Tyr293.

Belongs to the short-chain dehydrogenases/reductases (SDR) family.

The protein resides in the cytoplasm. It is found in the mitochondrion. Its subcellular location is the golgi apparatus. It localises to the lysosome. In terms of biological role, putative oxidoreductase. Acts as a tumor suppressor and plays a role in apoptosis. May function synergistically with p53/TP53 to control genotoxic stress-induced cell death. Plays a role in TGFB1 signaling and TGFB1-mediated cell death. May also play a role in tumor necrosis factor (TNF)-mediated cell death. Required for normal bone development. Inhibits Wnt signaling. The protein is WW domain-containing oxidoreductase (WWOX) of Gallus gallus (Chicken).